We begin with the raw amino-acid sequence, 408 residues long: 4-O-methyl-glucuronoyl methylesterase 1 (408 aa).

The signal sequence occupies residues 1 to 19 (MASSSRFAALLLLALPALA). 3 cysteine pairs are disulfide-bonded: cysteine 31-cysteine 65, cysteine 218-cysteine 354, and cysteine 250-cysteine 326. Residues 217–222 (GCSRDG) carry the GXSYXG catalytic site motif motif. Serine 219 (nucleophile) is an active-site residue. Positions 223, 265, and 273 each coordinate substrate. An N-linked (GlcNAc...) asparagine glycan is attached at asparagine 287. Tryptophan 317 provides a ligand contact to substrate. Asparagine 350 carries an N-linked (GlcNAc...) asparagine glycan. The Proton donor/acceptor role is filled by histidine 353. Residues asparagine 390, asparagine 395, and asparagine 401 are each glycosylated (N-linked (GlcNAc...) asparagine).

This sequence belongs to the carbohydrate esterase 15 (CE15) family.

The protein localises to the secreted. The enzyme catalyses a 4-O-methyl-alpha-D-glucuronosyl ester derivative + H2O = 4-O-methyl-alpha-D-glucuronate derivative + an alcohol + H(+). Glucuronoyl esterase which may play a significant role in biomass degradation, as it is considered to disconnect hemicellulose from lignin through the hydrolysis of the ester bond between 4-O-methyl-D-glucuronic acid residues of glucuronoxylans and aromatic alcohols of lignin. Can hydrolyze benzyl glucuronic acid (BnGlcA), allyl glucuronic acid (allylGlcA) and to a lower degree methyl glucuronic acid (MeGlcA) in vitro. This Wolfiporia cocos (strain MD-104) (Brown rot fungus) protein is 4-O-methyl-glucuronoyl methylesterase 1.